Reading from the N-terminus, the 248-residue chain is UPF0736 protein BCAH187_A1335 (248 aa).

This sequence belongs to the UPF0736 family.

The polypeptide is UPF0736 protein BCAH187_A1335 (Bacillus cereus (strain AH187)).